Consider the following 206-residue polypeptide: Large ribosomal subunit protein uL3 (206 aa).

The segment at 126-155 (HGHAGGPGAHGSRFHRHPGSMGANSTPSRV) is disordered.

It belongs to the universal ribosomal protein uL3 family. As to quaternary structure, part of the 50S ribosomal subunit. Forms a cluster with proteins L14 and L19.

In terms of biological role, one of the primary rRNA binding proteins, it binds directly near the 3'-end of the 23S rRNA, where it nucleates assembly of the 50S subunit. This Leptospira interrogans serogroup Icterohaemorrhagiae serovar copenhageni (strain Fiocruz L1-130) protein is Large ribosomal subunit protein uL3.